Here is a 430-residue protein sequence, read N- to C-terminus: UDP-N-acetylmuramoylalanine--D-glutamate ligase (430 aa).

Position 109–115 (109–115 (GTDGKST)) interacts with ATP.

It belongs to the MurCDEF family.

Its subcellular location is the cytoplasm. The catalysed reaction is UDP-N-acetyl-alpha-D-muramoyl-L-alanine + D-glutamate + ATP = UDP-N-acetyl-alpha-D-muramoyl-L-alanyl-D-glutamate + ADP + phosphate + H(+). It functions in the pathway cell wall biogenesis; peptidoglycan biosynthesis. Its function is as follows. Cell wall formation. Catalyzes the addition of glutamate to the nucleotide precursor UDP-N-acetylmuramoyl-L-alanine (UMA). This Thermotoga maritima (strain ATCC 43589 / DSM 3109 / JCM 10099 / NBRC 100826 / MSB8) protein is UDP-N-acetylmuramoylalanine--D-glutamate ligase.